The sequence spans 145 residues: Protein SprT-like (145 aa).

Residues 4 to 140 (TNYVQEVSLA…VCGNCHGKLM (137 aa)) form the SprT-like domain. His64 contacts Zn(2+). Glu65 is an active-site residue. Residue His68 participates in Zn(2+) binding.

The protein belongs to the SprT family. It depends on Zn(2+) as a cofactor.

Its subcellular location is the cytoplasm. The chain is Protein SprT-like from Streptococcus pyogenes serotype M3 (strain SSI-1).